The chain runs to 207 residues: ATP-dependent Clp protease proteolytic subunit (207 aa).

Ser-111 serves as the catalytic Nucleophile. His-136 is a catalytic residue.

It belongs to the peptidase S14 family. In terms of assembly, fourteen ClpP subunits assemble into 2 heptameric rings which stack back to back to give a disk-like structure with a central cavity, resembling the structure of eukaryotic proteasomes.

Its subcellular location is the cytoplasm. It catalyses the reaction Hydrolysis of proteins to small peptides in the presence of ATP and magnesium. alpha-casein is the usual test substrate. In the absence of ATP, only oligopeptides shorter than five residues are hydrolyzed (such as succinyl-Leu-Tyr-|-NHMec, and Leu-Tyr-Leu-|-Tyr-Trp, in which cleavage of the -Tyr-|-Leu- and -Tyr-|-Trp bonds also occurs).. Functionally, cleaves peptides in various proteins in a process that requires ATP hydrolysis. Has a chymotrypsin-like activity. Plays a major role in the degradation of misfolded proteins. This chain is ATP-dependent Clp protease proteolytic subunit, found in Aliivibrio salmonicida (strain LFI1238) (Vibrio salmonicida (strain LFI1238)).